The sequence spans 463 residues: MSHSSAPERATGAVITDWRPEDPAFWQQRGQRIASRNLWISVPCLLLAFCVWMLFSAVAVNLPKVGFNFTTDQLFMLTALPSVSGALLRVPYSFMVPIFGGRRWTAFSTGILIIPCVWLGFAVQDTSTPYSVFIIISLLCGFAGANFASSMANISFFFPKQKQGGALGLNGGLGNMGVSVMQLVAPLVVSLSIFAVFGSQGVKQPDGTELYLANASWIWVPFLAIFTIAAWFGMNDLATSKASIKEQLPVLKRGHLWIMSLLYLATFGSFIGFSAGFAMLSKTQFPDVQILQYAFFGPFIGALARSAGGALSDRLGGTRVTLVNFILMAIFSGLLFLTLPTDGQGGSFMAFFAVFLALFLTAGLGSGSTFQMISVIFRKLTMDRVKAEGGSDERAMREAATDTAAALGFISAIGAIGGFFIPKAFGSSLALTGSPVGAMKVFLIFYIACVVITWAVYGRHSKK.

At methionine 1–asparagine 37 the chain is on the cytoplasmic side. Residues leucine 38–alanine 59 form a helical membrane-spanning segment. The Periplasmic portion of the chain corresponds to valine 60 to glutamine 73. The helical transmembrane segment at leucine 74 to methionine 95 threads the bilayer. Nitrate is bound at residue arginine 89. Arginine 89 lines the nitrite pocket. At valine 96–arginine 102 the chain is on the cytoplasmic side. Residues arginine 103–alanine 122 form a helical membrane-spanning segment. Over valine 123 to tyrosine 130 the chain is Periplasmic. A helical membrane pass occupies residues serine 131–methionine 151. Residues alanine 152–alanine 166 are Cytoplasmic-facing. A helical membrane pass occupies residues leucine 167–valine 189. Nitrate is bound at residue asparagine 175. At serine 190 to tyrosine 211 the chain is on the periplasmic side. A helical membrane pass occupies residues leucine 212–glycine 233. At methionine 234–arginine 253 the chain is on the cytoplasmic side. A helical transmembrane segment spans residues glycine 254 to serine 281. Tyrosine 263 provides a ligand contact to nitrate. Tyrosine 263 contributes to the nitrite binding site. Residues lysine 282–glutamine 289 lie on the Periplasmic side of the membrane. Residues isoleucine 290–serine 312 traverse the membrane as a helical segment. Residues aspartate 313–glycine 316 lie on the Cytoplasmic side of the membrane. The chain crosses the membrane as a helical span at residues glycine 317–threonine 338. Residues leucine 339 to serine 347 lie on the Periplasmic side of the membrane. Residues phenylalanine 348 to isoleucine 373 form a helical membrane-spanning segment. The Cytoplasmic segment spans residues serine 374 to alanine 405. A helical membrane pass occupies residues alanine 406–serine 427. A nitrate-binding site is contributed by serine 411. The Periplasmic segment spans residues serine 428–proline 435. A helical transmembrane segment spans residues valine 436–glycine 458. Residues arginine 459–lysine 463 lie on the Cytoplasmic side of the membrane.

Belongs to the major facilitator superfamily. Nitrate/nitrite porter (TC 2.A.1.8) family.

The protein resides in the cell inner membrane. It carries out the reaction nitrate(in) + nitrite(out) = nitrate(out) + nitrite(in). Its function is as follows. Catalyzes nitrate uptake, nitrite uptake and nitrite export across the cytoplasmic membrane. Functions as a nitrate/nitrite exchanger, and protons are unlikely to be co-transported. The sequence is that of Nitrate/nitrite antiporter NarK from Escherichia coli (strain K12).